The chain runs to 514 residues: Bifunctional purine biosynthesis protein PurH (514 aa).

The MGS-like domain maps to 1–146 (MPPLALLSTS…KNFAHVTVLC (146 aa)).

Belongs to the PurH family.

The enzyme catalyses (6R)-10-formyltetrahydrofolate + 5-amino-1-(5-phospho-beta-D-ribosyl)imidazole-4-carboxamide = 5-formamido-1-(5-phospho-D-ribosyl)imidazole-4-carboxamide + (6S)-5,6,7,8-tetrahydrofolate. The catalysed reaction is IMP + H2O = 5-formamido-1-(5-phospho-D-ribosyl)imidazole-4-carboxamide. It functions in the pathway purine metabolism; IMP biosynthesis via de novo pathway; 5-formamido-1-(5-phospho-D-ribosyl)imidazole-4-carboxamide from 5-amino-1-(5-phospho-D-ribosyl)imidazole-4-carboxamide (10-formyl THF route): step 1/1. Its pathway is purine metabolism; IMP biosynthesis via de novo pathway; IMP from 5-formamido-1-(5-phospho-D-ribosyl)imidazole-4-carboxamide: step 1/1. This is Bifunctional purine biosynthesis protein PurH from Cyanothece sp. (strain PCC 7425 / ATCC 29141).